Reading from the N-terminus, the 505-residue chain is AMP phosphorylase (505 aa).

Residues G169, 195–200 (SRAITG), and T204 each bind AMP. Catalysis depends on D257, which acts as the Proton donor. 2 residues coordinate AMP: S265 and K289.

This sequence belongs to the thymidine/pyrimidine-nucleoside phosphorylase family. Type 2 subfamily.

It carries out the reaction AMP + phosphate = alpha-D-ribose 1,5-bisphosphate + adenine. It catalyses the reaction CMP + phosphate = cytosine + alpha-D-ribose 1,5-bisphosphate. The catalysed reaction is UMP + phosphate = alpha-D-ribose 1,5-bisphosphate + uracil. Functionally, catalyzes the conversion of AMP and phosphate to adenine and ribose 1,5-bisphosphate (R15P). Exhibits phosphorylase activity toward CMP and UMP in addition to AMP. Functions in an archaeal AMP degradation pathway, together with R15P isomerase and RubisCO. This Methanocorpusculum labreanum (strain ATCC 43576 / DSM 4855 / Z) protein is AMP phosphorylase.